The chain runs to 140 residues: Transcription antitermination protein NusB (140 aa).

This sequence belongs to the NusB family.

Its function is as follows. Involved in transcription antitermination. Required for transcription of ribosomal RNA (rRNA) genes. Binds specifically to the boxA antiterminator sequence of the ribosomal RNA (rrn) operons. This Streptococcus pneumoniae (strain JJA) protein is Transcription antitermination protein NusB.